The chain runs to 115 residues: Iron-sulfur cluster insertion protein ErpA (115 aa).

Positions 42, 106, and 108 each coordinate iron-sulfur cluster.

The protein belongs to the HesB/IscA family. In terms of assembly, homodimer. Iron-sulfur cluster is required as a cofactor.

Required for insertion of 4Fe-4S clusters for at least IspG. The polypeptide is Iron-sulfur cluster insertion protein ErpA (Baumannia cicadellinicola subsp. Homalodisca coagulata).